The sequence spans 80 residues: Acyl carrier protein (80 aa).

The 76-residue stretch at 4–79 folds into the Carrier domain; that stretch reads DEIFSKVRSI…DVVNFIKKRK (76 aa). O-(pantetheine 4'-phosphoryl)serine is present on Ser-39.

It belongs to the acyl carrier protein (ACP) family. 4'-phosphopantetheine is transferred from CoA to a specific serine of apo-ACP by AcpS. This modification is essential for activity because fatty acids are bound in thioester linkage to the sulfhydryl of the prosthetic group.

The protein localises to the cytoplasm. The protein operates within lipid metabolism; fatty acid biosynthesis. Its function is as follows. Carrier of the growing fatty acid chain in fatty acid biosynthesis. The protein is Acyl carrier protein of Borreliella burgdorferi (strain ATCC 35210 / DSM 4680 / CIP 102532 / B31) (Borrelia burgdorferi).